The chain runs to 2477 residues: MSLNTEHSKGDLRLLFGPQCSEIEDSIAHIRDAVYKDSAGLGFLSDILDELPSLWPVITSAWPALRKVQGEKQLAALGRRFENGSPDSEAEPSSLIMTPVTVMKHLVDFWNLQNVATHPAFPSSPLSRTTAPRIIDSQGFCVGILAAIAVACSQDTREFQSLASNAIRLAVCIGALVDFDEIVSGKAKSIAVRWETPADHDYLEQTLTKSPNVYISCYTDVNSVTITIPGDTAQRVKFKQELSGRGLHTKPIPLQGRFHHQQTHREGIQHIMNLCVKDPRFQLPHSNALILPLRSSHNGQVLINAAMLHTVALESILSVKADWWGTVSALLNSADMEVDESRLLSIGQEEFVPRSARGRLVARSNLDVYGAGVFANGNTSARSAVSLQNGTNTLNGSPQAAEMPPIAITGMACRYSNADTTSELWDLLELGVCTVEKAPGNRFRMPDLQREPKGPFWGHFLDRPDAFDHRFFNISAREAESMDPQQRVLLQVAYEAMESAGYCGWQHTELSDEIGCYVGVGSEDYTENVASRNANAFSATGTLQSFIAGRISHHFGWSGPSITLDTACSSAAVAIHMACKALQTKECSIAVAGGVNILTNPRVYQNLAAASFLSSTGACKSFDVSADGYCRGEGAGLVVLRPLQDAIDNGDPILGVIAGSVVNQGSNRSPITVPDAESQRSLYRKALSLAGVAPDEVTYVEAHGTGTQVGDPIELESLRKAFGNPLRSQSLHVGSIKGNIGHTETSSGVAGLLKTILMLQKQRIPKQANFRQLNPKVMPPLENDRLVIPVESTKWASARRVAMVSNYGASGSNAALIVRDHTPSLSGQGKAMAEYIRDMPILISARSEESIRAYCGALRTTLLRHPYSNTVVRELAYNVAMKQNRTLPFTLTFSTSSDPTSLSTRLEAIAAGKSADIIQKRESNEPPIVLCFGGQNGVTSSISQELYDSCVLLQTHLMACEQAGQKLGLPSLFPTIFTSDPIVNTVYLHFMLFSIQYASARAWIDSGLRVDRIVGHSFGQLTALSVAGSLSVQEGIRLVTERARLIQSNWGPESGVMLAVEGTQAEVQRVLEQTGHRAEIACYNGPQQQVLAGTGECIRAVEDALATNPLTSNVRVRRLENSHAFHSRLVDSIVPGLTELAESFVYQAPAIPIEACSATGDWSIVTPAKIVEHSRMPVHFQRAVERIAQKLQVPAVWLEAGSASPIIPMVRRVLEKSSATHTYHRVNLDGSDGSGNLATVTSALWGQGVHVQFWPFHHSQRGTFGWMNLPPYQFAKNRHWVDFDPTAFSFSGSSAEPQCGSQERAGLLRKLSDGPEEYLFAVNTQDVLYRSCTKGHAVLDQTLCPASMYMEMVLRAATSVFTLGESSTLTMSHIEDLVISSPLVLDPQGSVFVRLIPEAVASSQTWSFSIFSSSGTGNESSIHATGSVSLCNERSRALSHFQSMNRLMDPARARGIEDHLASNGLKGSTVYSALEQVTNYADYFRGVRQVFANGREAAGLVSMAPSATETTCNPILLDNFLQVAGIHVNCLSGREAEEVFVCNAIGETYVSDSLFKKEDGAIPLSWKVYTNYVRPSKNEIVCDIYVMNSQGDGLTAAIMGVRFMSVSIRSLTRALAKLNNNFPDVPQLPPTIQPAIVTADYDEASDNVNVDSDLVAVQEMLCELFGVSVEEVSPSVSLIDIGVDSLISTEVLSEIKRRFHKDISYSTLVDIPNIQGLTEHIFPGHSHLAPSQIVIKPVRQQTVIPQTVTSLPVPANAGPSLVSVAHQCFYETHAAVSHTHNADWAGFFNAIYPQQMTLITAYILEAFRALGSPLESSQADEVLPIISVLPRHEQLKKHLYTILESVNLVRQTPTGQLVRTATPISPLSSHALHAQIRDEHPPYALEHDLLQITGSRLAECLTGQADGVSLIFQDSQTRRLVGDVYTDSPVFKSGNLYLAQYLTDVIQTLGNGRQVKILEIGAGTGGTTKNLLEQLSALPGMATRMEYTFTDISPSLVAAARKKFSKYDFVRYETINVESSPPSLLHGQYDIVLSTNCVHATRNLVESCSNIRKLLRPDGILCLVELTRDIFWLDLVFGLLEGWWRFEDGRKHALATEDLWDQTLRQSGFEWVGWTNNEAVESNALRVIVASPTKAPSALEICSKPANMETVVWGERNGLQLLADIFYPDVVDTTQKRRACALMVHGGGHVMLSRKDIRPAQTQTLLDAGFLPISVDYRLCPEVSLSEGPMADVRDALGWVRRILPNIPLLRPDIRPDGNQVVAIGWSTGGHLAMTLAFTAPAVGIAAPEAILAFYCPTDYEDPFWSRPNFPFGQTVASNDIEYDVWEGVQSAPIKGYNPAFKERPLGGWMSTSDPRSRIALHMNWTGQTLPVLLGGMHKEFRIPDELPRPTDEEIQAVSPNYQIRIGRYRTPTFMVHGTSDDLVPCAQTESTYNALTQNGIEADIRVVQGAIEVLLYLQHPERARKWICSGSLTLEI.

The interval 14 to 269 (LLFGPQCSEI…HQQTHREGIQ (256 aa)) is N-terminal acylcarrier protein transacylase domain (SAT). A Ketosynthase family 3 (KS3) domain is found at 403-820 (MPPIAITGMA…GSNAALIVRD (418 aa)). Active-site for beta-ketoacyl synthase activity residues include Cys568, His703, and His742. Residues 930–1233 (LCFGGQNGVT…HRVNLDGSDG (304 aa)) are malonyl-CoA:ACP transacylase (MAT) domain. Ser1017 (for acyl/malonyl transferase activity) is an active-site residue. The interval 1302 to 1435 (QERAGLLRKL…GSVSLCNERS (134 aa)) is N-terminal hotdog fold. A PKS/mFAS DH domain is found at 1302–1612 (QERAGLLRKL…FMSVSIRSLT (311 aa)). Positions 1307–1611 (LLRKLSDGPE…RFMSVSIRSL (305 aa)) are product template (PT) domain. Catalysis depends on His1336, which acts as the Proton acceptor; for dehydratase activity. The tract at residues 1461–1612 (ASNGLKGSTV…FMSVSIRSLT (152 aa)) is C-terminal hotdog fold. The Proton donor; for dehydratase activity role is filled by Asp1518. Positions 1651–1725 (DSDLVAVQEM…GLTEHIFPGH (75 aa)) constitute a Carrier domain. Ser1685 carries the O-(pantetheine 4'-phosphoryl)serine modification. The methyltransferase (CMeT) domain stretch occupies residues 1882–2117 (PYALEHDLLQ…GFEWVGWTNN (236 aa)). Residues Ser2267 and Asp2421 each act as for thioesterase activity in the active site.

The protein localises to the cytoplasm. It is found in the cytosol. It carries out the reaction 3 malonyl-CoA + acetyl-CoA + S-adenosyl-L-methionine + H(+) = 5-methylorsellinate + S-adenosyl-L-homocysteine + 3 CO2 + 4 CoA. It functions in the pathway secondary metabolite biosynthesis; terpenoid biosynthesis. Its function is as follows. Non-reducing polyketide synthase; part of the gene cluster that mediates the biosynthesis of mycophenolic acid (MPA), the first isolated antibiotic natural product in the world obtained from a culture of Penicillium brevicompactum in 1893. MpaC catalyzes the synthesis of 5-methylorsellinic acid (5MOA) via the condensation of 1 acetyl-CoA starter unit with 3 malonyl-CoA units and one methylation step. The first step of the pathway is the synthesis of 5-methylorsellinic acid (5MOA) by the cytosolic polyketide synthase mpaC. 5MOA is then converted to the phthalide compound 5,7-dihydroxy-4,6-dimethylphthalide (DHMP) by the endoplasmic reticulum-bound cytochrome P450 monooxygenase mpaDE. MpaDE first catalyzes hydroxylation of 5-MOA to 4,6-dihydroxy-2-(hydroxymethyl)-3-methylbenzoic acid (DHMB). MpaDE then acts as a lactone synthase that catalyzes the ring closure to convert DHMB into DHMP. The next step is the prenylation of DHMP by the Golgi apparatus-associated prenyltransferase mpaA to yield farnesyl-DHMP (FDHMP). The ER-bound oxygenase mpaB then mediates the oxidative cleavage the C19-C20 double bond in FDHMP to yield FDHMP-3C via a mycophenolic aldehyde intermediate. The O-methyltransferase mpaG catalyzes the methylation of FDHMP-3C to yield MFDHMP-3C. After the cytosolic methylation of FDHMP-3C, MFDHMP-3C enters into peroxisomes probably via free diffusion due to its low molecular weight. Upon a peroxisomal CoA ligation reaction, catalyzed by a beta-oxidation component enzyme acyl-CoA ligase ACL891, MFDHMP-3C-CoA would then be restricted to peroxisomes for the following beta-oxidation pathway steps. The peroxisomal beta-oxidation machinery than converts MFDHMP-3C-CoA into MPA_CoA, via a beta-oxidation chain-shortening process. Finally mpaH acts as a peroxisomal acyl-CoA hydrolase with high substrate specificity toward MPA-CoA to release the final product MPA. The protein is Non-reducing polyketide synthase mapC of Penicillium roqueforti (strain FM164).